A 357-amino-acid polypeptide reads, in one-letter code: Carbamoyl phosphate synthase small chain (357 aa).

Residues 1 to 168 form a CPSase region; it reads MSKRLLILED…STATAYPSPN (168 aa). L-glutamine-binding residues include serine 46, glycine 220, and glycine 222. In terms of domain architecture, Glutamine amidotransferase type-1 spans 172 to 357; that stretch reads KVVVVDFGLK…FMDLMDNFKK (186 aa). The active-site Nucleophile is the cysteine 247. 5 residues coordinate L-glutamine: leucine 248, glutamine 251, asparagine 289, glycine 291, and tyrosine 292. Active-site residues include histidine 331 and aspartate 333.

This sequence belongs to the CarA family. Composed of two chains; the small (or glutamine) chain promotes the hydrolysis of glutamine to ammonia, which is used by the large (or ammonia) chain to synthesize carbamoyl phosphate. Tetramer of heterodimers (alpha,beta)4.

The enzyme catalyses hydrogencarbonate + L-glutamine + 2 ATP + H2O = carbamoyl phosphate + L-glutamate + 2 ADP + phosphate + 2 H(+). It carries out the reaction L-glutamine + H2O = L-glutamate + NH4(+). It functions in the pathway amino-acid biosynthesis; L-arginine biosynthesis; carbamoyl phosphate from bicarbonate: step 1/1. It participates in pyrimidine metabolism; UMP biosynthesis via de novo pathway; (S)-dihydroorotate from bicarbonate: step 1/3. Its function is as follows. Small subunit of the glutamine-dependent carbamoyl phosphate synthetase (CPSase). CPSase catalyzes the formation of carbamoyl phosphate from the ammonia moiety of glutamine, carbonate, and phosphate donated by ATP, constituting the first step of 2 biosynthetic pathways, one leading to arginine and/or urea and the other to pyrimidine nucleotides. The small subunit (glutamine amidotransferase) binds and cleaves glutamine to supply the large subunit with the substrate ammonia. The chain is Carbamoyl phosphate synthase small chain from Lactococcus lactis subsp. cremoris (strain MG1363).